The sequence spans 129 residues: ATP synthase epsilon chain (129 aa).

The protein belongs to the ATPase epsilon chain family. In terms of assembly, F-type ATPases have 2 components, CF(1) - the catalytic core - and CF(0) - the membrane proton channel. CF(1) has five subunits: alpha(3), beta(3), gamma(1), delta(1), epsilon(1). CF(0) has three main subunits: a, b and c.

Its subcellular location is the cell inner membrane. Produces ATP from ADP in the presence of a proton gradient across the membrane. The protein is ATP synthase epsilon chain of Nitratiruptor sp. (strain SB155-2).